The chain runs to 339 residues: Phosphate acyltransferase (339 aa).

Belongs to the PlsX family. In terms of assembly, homodimer. Probably interacts with PlsY.

It localises to the cytoplasm. The enzyme catalyses a fatty acyl-[ACP] + phosphate = an acyl phosphate + holo-[ACP]. It participates in lipid metabolism; phospholipid metabolism. In terms of biological role, catalyzes the reversible formation of acyl-phosphate (acyl-PO(4)) from acyl-[acyl-carrier-protein] (acyl-ACP). This enzyme utilizes acyl-ACP as fatty acyl donor, but not acyl-CoA. The chain is Phosphate acyltransferase from Acetivibrio thermocellus (strain ATCC 27405 / DSM 1237 / JCM 9322 / NBRC 103400 / NCIMB 10682 / NRRL B-4536 / VPI 7372) (Clostridium thermocellum).